Reading from the N-terminus, the 98-residue chain is ORF9b protein (98 aa).

Residues 9-98 (VPPALHLVDP…PDEFVVVTAK (90 aa)) form the 9b domain. The Nuclear export signal motif lies at 46–54 (ILRLGSQLS).

Belongs to the coronavirus group 2 protein 9b family. In terms of assembly, homodimer. Interacts with host XPO1; this interaction mediates protein ORF9b export out of the nucleus. Interacts with host MAVS. Interacts with protein ORF6.

The protein resides in the virion. It localises to the host cytoplasmic vesicle membrane. Its subcellular location is the host cytoplasm. It is found in the host endoplasmic reticulum. The protein localises to the host nucleus. The protein resides in the host mitochondrion. Its function is as follows. Plays a role in the inhibition of host innate immune response by targeting the mitochondrial-associated adapter MAVS. Mechanistically, usurps the E3 ligase ITCH to trigger the degradation of MAVS, TRAF3, and TRAF6. In addition, causes mitochondrial elongation by triggering ubiquitination and proteasomal degradation of dynamin-like protein 1/DNM1L. The chain is ORF9b protein from Homo sapiens (Human).